The primary structure comprises 142 residues: MGATALPPIWQMYLKDHRIYTFKNWPFLEDCSCTPERMAEAGFIHCPTENEPDLAQCFFCFKELEGWEPDDNPIEEHRKHSPGCAFLTVKKQVEELTVSEFLKLDKQRAKNKIAKETNNKQKEFEETRRTVRQSIEQLAALR.

The BIR repeat unit spans residues 18-88 (RIYTFKNWPF…KHSPGCAFLT (71 aa)). The residue at position 23 (Lys23) is an N6-acetyllysine. Position 34 is a phosphothreonine; by CDK1 and CDK15 (Thr34). Position 48 is a phosphothreonine (Thr48). 4 residues coordinate Zn(2+): Cys57, Cys60, His77, and Cys84. Lys90, Lys110, Lys112, and Lys115 each carry N6-acetyllysine. Thr117 carries the phosphothreonine; by AURKB modification.

Belongs to the IAP family. In terms of assembly, monomer or homodimer. Exists as a homodimer in the apo state and as a monomer in the CPC-bound state. The monomer protects cells against apoptosis more efficiently than the dimer. Only the dimeric form is capable of enhancing tubulin stability in cells. When phosphorylated, interacts with LAMTOR5/HBXIP; the resulting complex binds pro-CASP9, as well as active CASP9, but much less efficiently. Component of the chromosomal passenger complex (CPC) composed of at least BIRC5/survivin, CDCA8/borealin, INCENP, AURKB or AURKC; in the complex forms a triple-helix bundle-based subcomplex with INCENP and CDCA8. Interacts with JTB. Interacts (via BIR domain) with histone H3 phosphorylated at 'Thr-3' (H3pT3). Interacts with EVI5. Interacts with GTP-bound RAN in both the S and M phases of the cell cycle. Interacts with USP9X. Interacts with tubulin. Interacts with BIRC2/c-IAP1. The monomeric form interacts with XIAP/BIRC4. Both the dimeric and monomeric form can interact with DIABLO/SMAC. Interacts with BIRC6/bruce. Interacts with FBXL7; this interaction facilitates the polyubiquitination and subsequent proteasomal degradation of BIRC5 by the SCF(FBXL7) E3 ubiquitin-protein ligase complex. Post-translationally, ubiquitinated by the Cul9-RING ubiquitin-protein ligase complex, leading to its degradation. Ubiquitination is required for centrosomal targeting. Deubiquitinated by USP35 or USP38; leading to stabilization. In vitro phosphorylation at Thr-117 by AURKB prevents interaction with INCENP and localization to mitotic chromosomes. Phosphorylation at Thr-48 by CK2 is critical for its mitotic and anti-apoptotic activities. Phosphorylation at Thr-34 by CDK15 is critical for its anti-apoptotic activity.

The protein resides in the cytoplasm. The protein localises to the nucleus. Its subcellular location is the chromosome. It is found in the centromere. It localises to the cytoskeleton. The protein resides in the spindle. The protein localises to the kinetochore. Its subcellular location is the midbody. Its function is as follows. Multitasking protein that has dual roles in promoting cell proliferation and preventing apoptosis. Component of a chromosome passage protein complex (CPC) which is essential for chromosome alignment and segregation during mitosis and cytokinesis. Acts as an important regulator of the localization of this complex; directs CPC movement to different locations from the inner centromere during prometaphase to midbody during cytokinesis and participates in the organization of the center spindle by associating with polymerized microtubules. Involved in the recruitment of CPC to centromeres during early mitosis via association with histone H3 phosphorylated at 'Thr-3' (H3pT3) during mitosis. The complex with RAN plays a role in mitotic spindle formation by serving as a physical scaffold to help deliver the RAN effector molecule TPX2 to microtubules. May counteract a default induction of apoptosis in G2/M phase. The acetylated form represses STAT3 transactivation of target gene promoters. May play a role in neoplasia. Inhibitor of CASP3 and CASP7. Essential for the maintenance of mitochondrial integrity and function. In Rattus norvegicus (Rat), this protein is Baculoviral IAP repeat-containing protein 5 (Birc5).